The sequence spans 103 residues: Putative double-stranded DNA mimic protein APJL_1366 (103 aa).

Belongs to the putative dsDNA mimic protein family.

May act as a double-stranded DNA (dsDNA) mimic. Probably regulates the activity of a dsDNA-binding protein. The protein is Putative double-stranded DNA mimic protein APJL_1366 of Actinobacillus pleuropneumoniae serotype 3 (strain JL03).